The primary structure comprises 987 residues: Mitotic checkpoint serine/threonine-protein kinase bub-1 (987 aa).

2 disordered regions span residues 278 to 385 (RRRH…TSKS) and 574 to 599 (LAAN…KDSS). Positions 350–364 (ERLKIMTAGRKDGNP) are enriched in basic and acidic residues. Positions 368-380 (STSISSNYSTASA) are enriched in low complexity. Polar residues predominate over residues 575-587 (AANQAVQPSVTES). The segment covering 588-599 (SKPERSDPKDSS) has biased composition (basic and acidic residues). In terms of domain architecture, Protein kinase spans 690-987 (LHIQTLIGQG…EACDLAANQK (298 aa)). Residues 696–704 (IGQGGYAKV) and K718 contribute to the ATP site. Catalysis depends on D814, which acts as the Proton acceptor.

It belongs to the protein kinase superfamily. Ser/Thr protein kinase family. BUB1 subfamily. In terms of assembly, interacts (via kinase domain) with mdf-1 (via coiled coil domain); the interaction recruits mdf-1 to unattached kinetochores during mitosis and between homologous chromosomes in early anaphase of meiosis I. May interact with bub-3; for localization at the kinetochore and the onset of anaphase.

It localises to the cytoplasm. Its subcellular location is the cell cortex. The protein localises to the nucleus. It is found in the chromosome. The protein resides in the centromere. It localises to the kinetochore. It catalyses the reaction L-seryl-[protein] + ATP = O-phospho-L-seryl-[protein] + ADP + H(+). The enzyme catalyses L-threonyl-[protein] + ATP = O-phospho-L-threonyl-[protein] + ADP + H(+). Its function is as follows. Serine/threonine-protein kinase essential for spindle-assembly checkpoint signaling. Plays a key role in the recruitment of the checkpoint proteins bub-3, mdf-1 and mdf-2 to unattached kinetochores. mdf-1 recruitment is independent of bub-1 kinase activity. Has a role in the correct kinetochore localization of the spindly-like protein spdl-1. In addition, during meiotic anaphase I, controls the recruitment of hcp-1/2 and klp-19 to the ring-shaped domain formed between chromosomes. Involved in chromosome alignment, chromosome homolog segregation and spindle assembly. In association with bub-3 at the kinetochore region of chromosomes, promotes the onset on anaphase independently from spindle checkpoint signaling and promotes the formation of stable end-on bipolar attachments of chromosomes. Plays a role in nuclear envelope breakdown. Required maternally during embryogenesis and in the zygote for the postembryonic development of several tissues including ventral cord neurons, gonad, intestine and seam cells. In Caenorhabditis elegans, this protein is Mitotic checkpoint serine/threonine-protein kinase bub-1.